The primary structure comprises 232 residues: Large ribosomal subunit protein uL1 (232 aa).

It belongs to the universal ribosomal protein uL1 family. In terms of assembly, part of the 50S ribosomal subunit.

Functionally, binds directly to 23S rRNA. The L1 stalk is quite mobile in the ribosome, and is involved in E site tRNA release. Protein L1 is also a translational repressor protein, it controls the translation of the L11 operon by binding to its mRNA. The sequence is that of Large ribosomal subunit protein uL1 from Mesorhizobium japonicum (strain LMG 29417 / CECT 9101 / MAFF 303099) (Mesorhizobium loti (strain MAFF 303099)).